The primary structure comprises 249 residues: 2,3-bisphosphoglycerate-dependent phosphoglycerate mutase (249 aa).

Residues 8 to 15 (RHGQSAWN), 21 to 22 (TG), R60, 87 to 90 (ERHY), K98, 114 to 115 (RR), and 183 to 184 (GN) each bind substrate. H9 serves as the catalytic Tele-phosphohistidine intermediate. E87 acts as the Proton donor/acceptor in catalysis. The tract at residues 115-137 (RSYDTPPPPLPADDPRSPAGDAR) is disordered.

The protein belongs to the phosphoglycerate mutase family. BPG-dependent PGAM subfamily. In terms of assembly, homodimer.

The enzyme catalyses (2R)-2-phosphoglycerate = (2R)-3-phosphoglycerate. Its pathway is carbohydrate degradation; glycolysis; pyruvate from D-glyceraldehyde 3-phosphate: step 3/5. Catalyzes the interconversion of 2-phosphoglycerate and 3-phosphoglycerate. The protein is 2,3-bisphosphoglycerate-dependent phosphoglycerate mutase of Nitratidesulfovibrio vulgaris (strain DSM 19637 / Miyazaki F) (Desulfovibrio vulgaris).